The chain runs to 334 residues: Beta-hexosaminidase (334 aa).

Substrate contacts are provided by residues D60, R68, R133, and K163–H164. Catalysis depends on H176, which acts as the Proton donor/acceptor. The active-site Nucleophile is the D247.

The protein belongs to the glycosyl hydrolase 3 family. NagZ subfamily.

It localises to the cytoplasm. The catalysed reaction is Hydrolysis of terminal non-reducing N-acetyl-D-hexosamine residues in N-acetyl-beta-D-hexosaminides.. It functions in the pathway cell wall biogenesis; peptidoglycan recycling. In terms of biological role, plays a role in peptidoglycan recycling by cleaving the terminal beta-1,4-linked N-acetylglucosamine (GlcNAc) from peptide-linked peptidoglycan fragments, giving rise to free GlcNAc, anhydro-N-acetylmuramic acid and anhydro-N-acetylmuramic acid-linked peptides. The chain is Beta-hexosaminidase from Xanthomonas oryzae pv. oryzae (strain MAFF 311018).